Reading from the N-terminus, the 358-residue chain is Protein Wnt-8b (358 aa).

A signal peptide spans 1 to 23 (MFMHLEVYYYAFILMAHMKTCCG). Cys-55 and Cys-66 form a disulfide bridge. The N-linked (GlcNAc...) asparagine glycan is linked to Asn-104. Disulfide bonds link Cys-105–Cys-113, Cys-115–Cys-133, Cys-181–Cys-195, Cys-183–Cys-190, Cys-257–Cys-295, Cys-273–Cys-288, Cys-292–Cys-334, Cys-310–Cys-325, Cys-312–Cys-322, and Cys-317–Cys-318. Ser-187 carries O-palmitoleoyl serine lipidation. Residues Asn-260 and Asn-279 are each glycosylated (N-linked (GlcNAc...) asparagine). N-linked (GlcNAc...) asparagine glycosylation occurs at Asn-345.

It belongs to the Wnt family. Post-translationally, palmitoleoylation is required for efficient binding to frizzled receptors. Depalmitoleoylation leads to Wnt signaling pathway inhibition. In terms of processing, proteolytic processing by tiki1 and tiki2 promotes oxidation and formation of large disulfide-bond oligomers, leading to inactivation of wnt8b. In terms of tissue distribution, hindbrain r1, 2 and 5.

Its subcellular location is the secreted. The protein localises to the extracellular space. The protein resides in the extracellular matrix. In terms of biological role, ligand for fzd8a, a member of the G-protein coupled frizzled receptor family. May play a role in the establishment of polarity in the nervous system. Involved in canonical Wnt signaling pathway. During embryonic development, required for the acquisition of caudal diencephalic fate. Antagonizes eye specification. The protein is Protein Wnt-8b (wnt8b) of Danio rerio (Zebrafish).